Consider the following 500-residue polypeptide: MASYVAAIDQGTTSTRCMIFNHSGRVVAVDQVEHRQIFPRAGWVEHDPEEIWSNTRQVCAGALAKADLVTSEIAAVGITNQRETTVVWDRKTGKPVYNAIVWQDTRTDSIVNELAADGGQNRYHRKTGLPLATYFSGTKIRWILDNVDGVRARAEKGELLFGNMDTWVLWNSTGGPDGGLHVTDPTNASRTLLMDLETLDWDTDICAEFGIPTSMLPEIRSSSEVYGHFRERGVFGGLPIAGILGDQQAATFGQACLSPGEAKNTYGTGNFLLLNTGTERVLSENGLLTTVGYKIGGNDTVYCLEGSIAVTGSLVQWLRDNLGLIASAPEIEQLARTVDDNGGAYFVPAFSGLFAPHWRSDARGAIVGLTRFVDRGHLARAVLEATAFQTREVIEAMNADSGVPLKSLKVDGGMVGNELLMQFQADILGVPVIRPVVSETTALGAAYAAGLAVGFWGSEEDIRSNWAKDKQWDPLMPEEKREAEYRQWQKAVTKTFDWVE.

Thr12 serves as a coordination point for ADP. ATP contacts are provided by Thr12, Thr13, and Ser14. Thr12 lines the sn-glycerol 3-phosphate pocket. Arg16 is an ADP binding site. Sn-glycerol 3-phosphate contacts are provided by Arg82, Glu83, Tyr134, and Asp246. Glycerol-binding residues include Arg82, Glu83, Tyr134, Asp246, and Gln247. The ADP site is built by Thr268 and Gly312. ATP is bound by residues Thr268, Gly312, Gln316, and Gly413. The ADP site is built by Gly413 and Asn417.

The protein belongs to the FGGY kinase family.

The enzyme catalyses glycerol + ATP = sn-glycerol 3-phosphate + ADP + H(+). The protein operates within polyol metabolism; glycerol degradation via glycerol kinase pathway; sn-glycerol 3-phosphate from glycerol: step 1/1. With respect to regulation, inhibited by fructose 1,6-bisphosphate (FBP). Functionally, key enzyme in the regulation of glycerol uptake and metabolism. Catalyzes the phosphorylation of glycerol to yield sn-glycerol 3-phosphate. The protein is Glycerol kinase of Saccharopolyspora erythraea (strain ATCC 11635 / DSM 40517 / JCM 4748 / NBRC 13426 / NCIMB 8594 / NRRL 2338).